The primary structure comprises 290 residues: Plasma membrane ascorbate-dependent reductase CYBRD1 (290 aa).

The Cytoplasmic portion of the chain corresponds to M1–R7. A helical transmembrane segment spans residues G8 to L32. The region spanning S15 to T220 is the Cytochrome b561 domain. At H33–F47 the chain is on the extracellular side. Residues N48–Y69 traverse the membrane as a helical segment. Residues H50, R70, and K79 each coordinate heme b. Topologically, residues R70–S78 are cytoplasmic. Residues K79 and K83 each coordinate L-ascorbate. Residues K79–F105 form a helical membrane-spanning segment. A heme b-binding site is contributed by H86. At E106–S118 the chain is on the extracellular side. Residue H108 participates in Fe(3+) binding. Heme b-binding positions include H115–S118 and H120. The helical transmembrane segment at L119–L144 threads the bilayer. The Cytoplasmic segment spans residues P145 to L151. R152 is an L-ascorbate binding site. A helical transmembrane segment spans residues R152–T179. Residues H159 and E180 each contribute to the heme b site. Over E180 to E197 the chain is Extracellular. A helical transmembrane segment spans residues G198–P222. The Cytoplasmic portion of the chain corresponds to Q223 to M290. K225 serves as a coordination point for heme b. S232 carries the phosphoserine modification. The segment at S257–M290 is disordered. A compositionally biased stretch (low complexity) spans A260–G272. Phosphothreonine is present on T289.

Homodimer. It depends on heme b as a cofactor. In terms of tissue distribution, highly expressed in the brush-border membrane of duodenal enterocytes (at protein level). Also expressed in liver and spleen.

It is found in the cell membrane. Its subcellular location is the apical cell membrane. It catalyses the reaction Fe(3+)(out) + L-ascorbate(in) = monodehydro-L-ascorbate radical(in) + Fe(2+)(out) + H(+). It carries out the reaction Cu(2+)(out) + L-ascorbate(in) = Cu(+)(out) + monodehydro-L-ascorbate radical(in) + H(+). The catalysed reaction is monodehydro-L-ascorbate radical(out) + L-ascorbate(in) = monodehydro-L-ascorbate radical(in) + L-ascorbate(out). Functionally, plasma membrane reductase that uses cytoplasmic ascorbate as an electron donor to reduce extracellular Fe(3+) into Fe(2+). Probably functions in dietary iron absorption at the brush border of duodenal enterocytes by producing Fe(2+), the divalent form of iron that can be transported into enterocytes. It is also able to reduce extracellular monodehydro-L-ascorbate and may be involved in extracellular ascorbate regeneration by erythrocytes in blood. May also act as a ferrireductase in airway epithelial cells. May also function as a cupric transmembrane reductase. This chain is Plasma membrane ascorbate-dependent reductase CYBRD1, found in Mus musculus (Mouse).